Reading from the N-terminus, the 269-residue chain is Sororin (269 aa).

3 disordered regions span residues 1 to 39 (MSEG…IMKR), 56 to 110 (VNTG…PKIN), and 146 to 169 (SLNS…STPN). Residues 57 to 66 (NTGSQSTPKV) show a composition bias toward polar residues. The KEN box signature appears at 85 to 87 (KEN). Residues 146–155 (SLNSSSSLYS) are compositionally biased toward low complexity. The FGF motif signature appears at 180-182 (FGF). A C-terminal Sororin domain region spans residues 247-269 (LDEWAAFMNAEFEEAEKFDLTVE).

This sequence belongs to the sororin family. Interacts with the APC/C complex. Interacts with the chromatin-bound cohesin complex; the interaction is indirect, occurs after DNA replication and requires acetylation of the cohesin component smc3. Interacts (via the FGF motif) with pds5a and pds5b; the interaction is direct and prevents the interaction of pds5a with wapl. Ubiquitinated by the APC/C complex in G1, leading to its degradation.

Its subcellular location is the nucleus. It is found in the chromosome. It localises to the cytoplasm. Its function is as follows. Regulator of sister chromatid cohesion in mitosis stabilizing cohesin complex association with chromatin. May antagonize the action of wapl which stimulates cohesin dissociation from chromatin. Cohesion ensures that chromosome partitioning is accurate in both meiotic and mitotic cells and plays an important role in DNA repair. Required for efficient DNA double-stranded break repair. The sequence is that of Sororin (cdca5-a) from Xenopus laevis (African clawed frog).